Reading from the N-terminus, the 103-residue chain is Histone H4 (103 aa).

Over residues 1 to 14 (MSGRGKGGKGLGKG) the composition is skewed to gly residues. Residues 1–20 (MSGRGKGGKGLGKGGAKRHR) form a disordered region. K6 carries the N6-acetyl-N6-methyllysine; alternate modification. An N6-acetyllysine; alternate mark is found at K6, K9, and K13. Residues K6, K9, and K13 each carry the N6-methyllysine; alternate modification. N6-butyryllysine; alternate occurs at positions 9 and 13. K13 is modified (N6-acetyl-N6-methyllysine; alternate). An N6-acetyllysine modification is found at K17. A DNA-binding region spans residues 17–21 (KRHRK). An N6-succinyllysine modification is found at K32. R56 is subject to Omega-N-methylarginine. S61 and S65 each carry phosphoserine. K78 is modified (N6-succinyllysine). The residue at position 80 (K80) is an N6-acetyllysine. Position 92 is an N6-glutaryllysine (K92).

Belongs to the histone H4 family. As to quaternary structure, the nucleosome is a histone octamer containing two molecules each of H2A, H2B, H3 and H4 assembled in one H3-H4 heterotetramer and two H2A-H2B heterodimers. The octamer wraps approximately 147 bp of DNA. Histone H4 is a component of the UAF (upstream activation factor) complex which consists of UAF30, RRN5, RRN9, RRN10, and histones H3 and H4. Glutarylation at Lys-92 (H4K91glu) destabilizes nucleosomes by promoting dissociation of the H2A-H2B dimers from nucleosomes.

It is found in the nucleus. It localises to the chromosome. Core component of nucleosome. Nucleosomes wrap and compact DNA into chromatin, limiting DNA accessibility to the cellular machineries which require DNA as a template. Histones thereby play a central role in transcription regulation, DNA repair, DNA replication and chromosomal stability. DNA accessibility is regulated via a complex set of post-translational modifications of histones, also called histone code, and nucleosome remodeling. Component of the UAF (upstream activation factor) complex which interacts with the upstream element of the RNA polymerase I promoter and forms a stable preinitiation complex. Together with SPT15/TBP UAF seems to stimulate basal transcription to a fully activated level. The polypeptide is Histone H4 (HHF1) (Saccharomyces cerevisiae (strain ATCC 204508 / S288c) (Baker's yeast)).